The chain runs to 670 residues: Solute carrier organic anion transporter family member 1A6 (670 aa).

The Cytoplasmic portion of the chain corresponds to 1–20 (MGEPEKRAGTHGIRCFAKIK). The chain crosses the membrane as a helical span at residues 21–40 (VFLLALTWAYASKALSATYM). Residues 41 to 59 (NSMLTQIERRFNISTSIVG) lie on the Extracellular side of the membrane. Residue Asn-52 is glycosylated (N-linked (GlcNAc...) asparagine). A helical membrane pass occupies residues 60–80 (LINGSFEVGNLLLIIFVSYFG). Over 81 to 86 (RKRHRP) the chain is Cytoplasmic. A helical membrane pass occupies residues 87-111 (IMIGIGCAVMGLGCFIISLPHFLMG). The Extracellular segment spans residues 112-155 (RYEYETTISPTSNLSSNSFLCMENRTQTLKPTQDPAECVKEMKS). Asn-124 and Asn-135 each carry an N-linked (GlcNAc...) asparagine glycan. The helical transmembrane segment at 156–184 (LMWIYVLVGNIIRGIGETPIMPLGISYIE) threads the bilayer. The Cytoplasmic segment spans residues 185 to 203 (DFAKSENSPFYIGILEVGK). Residues 204–224 (ITGPIAAIWLGSFCATIYVDM) form a helical membrane-spanning segment. The Extracellular portion of the chain corresponds to 225–242 (GSVNTDDLTITPTDTRCV). A helical transmembrane segment spans residues 243 to 267 (GAWWIGFLVCAGLNILISIPFFFFP). Topologically, residues 268 to 311 (KTFPKEGPEDMANETKNDEGDKHREKAKEEKRGITKDFFLFMKS) are cytoplasmic. A disordered region spans residues 276–295 (EDMANETKNDEGDKHREKAK). A helical transmembrane segment spans residues 312 to 333 (LSCNPIYMLCVLTSVLQVNGFV). The Extracellular segment spans residues 334-353 (SIFTFKPKYLEHHYGKSSSE). Residues 354–377 (AIFLMGLYTLPSVCVGYLISGFIM) traverse the membrane as a helical segment. The Cytoplasmic portion of the chain corresponds to 378 to 381 (KKFK). Residues 382 to 405 (ITLKKAAFISYCLGMSECLLSLCN) traverse the membrane as a helical segment. At 406–513 (FMLTCDNVPI…PDCANKLQYF (108 aa)) the chain is on the extracellular side. The Kazal-like domain maps to 433–488 (NTVLADCNTRCSCLTKTWDPVCGDNGLAYITPCLAGCEKSVGSGINMVLQDCSCIQ). Disulfide bonds link Cys-439-Cys-469, Cys-445-Cys-465, and Cys-454-Cys-486. A glycan (N-linked (GlcNAc...) asparagine) is linked at Asn-492. A helical transmembrane segment spans residues 514 to 536 (LIITVFCSFFYSLSLIPGYMIFL). The Cytoplasmic portion of the chain corresponds to 537-545 (RCMKSEEKS). The helical transmembrane segment at 546 to 571 (LGIGLQAFCMRILGGILAPIYFGVLI) threads the bilayer. Topologically, residues 572 to 605 (DRTCLHWGTQKCGEPGACRTYEINSFRSIYLGLP) are extracellular. A helical transmembrane segment spans residues 606–623 (AALRGSSYLPAFFILRLM). The Cytoplasmic portion of the chain corresponds to 624–670 (RKFQFPGDINSPVTDHVEMMLTEKESEHTDVHRSPQVENDGELKTKL). Ser-634 carries the post-translational modification Phosphoserine. Residues 647 to 670 (KESEHTDVHRSPQVENDGELKTKL) form a disordered region.

This sequence belongs to the organo anion transporter (TC 2.A.60) family.

Its subcellular location is the cell membrane. May mediate the Na(+)-independent transport of organic anions. This chain is Solute carrier organic anion transporter family member 1A6 (Slco1a6), found in Rattus norvegicus (Rat).